A 375-amino-acid polypeptide reads, in one-letter code: PTS system fructose-specific EIIC component (375 aa).

The region spanning 16–370 (VKEDLMTGVS…KPNFDAKMAA (355 aa)) is the PTS EIIC type-2 domain. 10 helical membrane-spanning segments follow: residues 24–44 (VSFM…GYAV), 68–88 (IGVA…AYAI), 93–113 (GLAP…LQAA), 122–142 (GSAG…GIVA), 160–180 (VLLI…FVLG), 203–223 (AILL…GPIN), 238–258 (VTAP…GLAL), 279–299 (VLLG…ADPA), 301–321 (VIPS…ALGV), and 340–360 (FMFI…ATAI).

The protein localises to the cell membrane. Its function is as follows. The phosphoenolpyruvate-dependent sugar phosphotransferase system (sugar PTS), a major carbohydrate active transport system, catalyzes the phosphorylation of incoming sugar substrates concomitantly with their translocation across the cell membrane. The enzyme II PtfABC PTS system is involved in fructose transport. In Haloferax volcanii (strain ATCC 29605 / DSM 3757 / JCM 8879 / NBRC 14742 / NCIMB 2012 / VKM B-1768 / DS2) (Halobacterium volcanii), this protein is PTS system fructose-specific EIIC component.